Consider the following 159-residue polypeptide: Type IV major alpha-pilin (159 aa).

The propeptide at 1-6 (MNAQKG) is leader sequence. The residue at position 7 (Phe7) is an N-methylphenylalanine. Residues 7-27 (FTLIELMIVIAIIGILAAIAL) form a helical membrane-spanning segment. The tract at residues 64–87 (VLSEESSTSKENIGLTSSETSTKP) is disordered. The segment covering 67 to 87 (EESSTSKENIGLTSSETSTKP) has biased composition (polar residues). Cys137 and Cys156 form a disulfide bridge.

It belongs to the N-Me-Phe pilin family. In terms of assembly, major component of the type IV pilus (T4P) that plays a role in surface and attachment to the host epithelial tissues.

It is found in the fimbrium. The protein localises to the membrane. This Moraxella bovis protein is Type IV major alpha-pilin (tfpI).